A 142-amino-acid polypeptide reads, in one-letter code: Hemoglobin subunit beta-C (142 aa).

The Globin domain occupies Pro-2–His-142. Residues His-59 and His-88 each contribute to the heme b site.

It belongs to the globin family. In terms of assembly, heterotetramer of two alpha chains and two beta chains. As to expression, red blood cells.

Its function is as follows. Involved in oxygen transport from the lung to the various peripheral tissues. The protein is Hemoglobin subunit beta-C (HBBC) of Ovis aries (Sheep).